Consider the following 291-residue polypeptide: 4-diphosphocytidyl-2-C-methyl-D-erythritol kinase (291 aa).

K11 is a catalytic residue. 95–105 (PVAAGLAGGSS) is an ATP binding site. The active site involves D137.

Belongs to the GHMP kinase family. IspE subfamily.

The catalysed reaction is 4-CDP-2-C-methyl-D-erythritol + ATP = 4-CDP-2-C-methyl-D-erythritol 2-phosphate + ADP + H(+). It functions in the pathway isoprenoid biosynthesis; isopentenyl diphosphate biosynthesis via DXP pathway; isopentenyl diphosphate from 1-deoxy-D-xylulose 5-phosphate: step 3/6. Functionally, catalyzes the phosphorylation of the position 2 hydroxy group of 4-diphosphocytidyl-2C-methyl-D-erythritol. This chain is 4-diphosphocytidyl-2-C-methyl-D-erythritol kinase, found in Alkaliphilus metalliredigens (strain QYMF).